Reading from the N-terminus, the 387-residue chain is Low specificity L-threonine aldolase (387 aa).

Residue Lys213 is modified to N6-(pyridoxal phosphate)lysine. Lys228 is covalently cross-linked (Glycyl lysine isopeptide (Lys-Gly) (interchain with G-Cter in ubiquitin)). Ser367 and Ser369 each carry phosphoserine. Thr370 is modified (phosphothreonine).

This sequence belongs to the threonine aldolase family. As to quaternary structure, homotetramer. The cofactor is pyridoxal 5'-phosphate.

The catalysed reaction is L-threonine = acetaldehyde + glycine. It carries out the reaction L-allo-threonine = acetaldehyde + glycine. Its pathway is amino-acid biosynthesis; glycine biosynthesis; glycine from L-allo-threonine: step 1/1. The protein operates within amino-acid degradation; L-threonine degradation via aldolase pathway; acetaldehyde and glycine from L-threonine: step 1/1. Functionally, catalyzes the cleavage of L-allo-threonine and L-threonine to glycine and acetaldehyde. In Saccharomyces cerevisiae (strain ATCC 204508 / S288c) (Baker's yeast), this protein is Low specificity L-threonine aldolase (GLY1).